Here is a 463-residue protein sequence, read N- to C-terminus: Bifunctional protein HldE (463 aa).

The interval 1-311 (MKKILVVGDL…EEIALILNQT (311 aa)) is ribokinase. An ATP-binding site is contributed by 191 to 194 (NRFE). D260 is a catalytic residue. The cytidylyltransferase stretch occupies residues 334–463 (FTNGCFDLLH…IEKIKRTCND (130 aa)).

It in the N-terminal section; belongs to the carbohydrate kinase PfkB family. The protein in the C-terminal section; belongs to the cytidylyltransferase family. Homodimer.

The catalysed reaction is D-glycero-beta-D-manno-heptose 7-phosphate + ATP = D-glycero-beta-D-manno-heptose 1,7-bisphosphate + ADP + H(+). It carries out the reaction D-glycero-beta-D-manno-heptose 1-phosphate + ATP + H(+) = ADP-D-glycero-beta-D-manno-heptose + diphosphate. Its pathway is nucleotide-sugar biosynthesis; ADP-L-glycero-beta-D-manno-heptose biosynthesis; ADP-L-glycero-beta-D-manno-heptose from D-glycero-beta-D-manno-heptose 7-phosphate: step 1/4. It functions in the pathway nucleotide-sugar biosynthesis; ADP-L-glycero-beta-D-manno-heptose biosynthesis; ADP-L-glycero-beta-D-manno-heptose from D-glycero-beta-D-manno-heptose 7-phosphate: step 3/4. In terms of biological role, catalyzes the phosphorylation of D-glycero-D-manno-heptose 7-phosphate at the C-1 position to selectively form D-glycero-beta-D-manno-heptose-1,7-bisphosphate. Catalyzes the ADP transfer from ATP to D-glycero-beta-D-manno-heptose 1-phosphate, yielding ADP-D-glycero-beta-D-manno-heptose. This chain is Bifunctional protein HldE, found in Helicobacter pylori (strain G27).